The following is an 87-amino-acid chain: Beta-toxin Cn4 (87 aa).

The first 19 residues, 1–19, serve as a signal peptide directing secretion; sequence MNSLLMITACLALVGTVWA. One can recognise an LCN-type CS-alpha/beta domain in the interval 20–85; that stretch reads KEGYLVNSYT…VWPLKNKTCN (66 aa). Intrachain disulfides connect C31-C84, C35-C60, C44-C65, and C48-C67. At N85 the chain carries Asparagine amide.

This sequence belongs to the long (4 C-C) scorpion toxin superfamily. Sodium channel inhibitor family. Beta subfamily. Expressed by the venom gland.

The protein resides in the secreted. Its function is as follows. Beta toxins bind voltage-independently at site-4 of sodium channels (Nav) and shift the voltage of activation toward more negative potentials thereby affecting sodium channel activation and promoting spontaneous and repetitive firing. This toxin affects the activation mechanism of sodium channels of squid axon. It also competes with Cn2 in rat brain synaptosomes. Is lethal to mice. The chain is Beta-toxin Cn4 from Centruroides noxius (Mexican scorpion).